The sequence spans 156 residues: MPRRRSIEPRKILPDPKFGSELLAKFINVLMVDGKKSIAESIVYNALDTLAQRTNKDALVAFEEALENVRPTVEVKSRRVGGSTYQVPVEVRPARRNALGMRWIVEAARKRGDKSMALRLANELSDASENKGSAVKKREDVHRMAEANKAFAHYRW.

It belongs to the universal ribosomal protein uS7 family. Part of the 30S ribosomal subunit. Contacts proteins S9 and S11.

In terms of biological role, one of the primary rRNA binding proteins, it binds directly to 16S rRNA where it nucleates assembly of the head domain of the 30S subunit. Is located at the subunit interface close to the decoding center, probably blocks exit of the E-site tRNA. The polypeptide is Small ribosomal subunit protein uS7 (Mannheimia succiniciproducens (strain KCTC 0769BP / MBEL55E)).